Reading from the N-terminus, the 1099-residue chain is Carbamoyl phosphate synthase large chain (1099 aa).

The interval 1-402 (MPKREDIKRI…ALGKALRSLE (402 aa)) is carboxyphosphate synthetic domain. Arginine 129, arginine 169, glycine 175, glycine 176, glutamate 208, valine 210, glutamate 215, glycine 241, isoleucine 242, histidine 243, glutamine 285, and glutamate 299 together coordinate ATP. The ATP-grasp 1 domain maps to 133–328 (KETMEKAGLE…IAKVAALLAV (196 aa)). Residues glutamine 285, glutamate 299, and asparagine 301 each contribute to the Mg(2+) site. Glutamine 285, glutamate 299, and asparagine 301 together coordinate Mn(2+). The interval 403-541 (LDAAPKLDLE…STYNGVENEA (139 aa)) is oligomerization domain. Positions 542–944 (VPSDREKIMI…AFAKAQIAAG (403 aa)) are carbamoyl phosphate synthetic domain. One can recognise an ATP-grasp 2 domain in the interval 666–857 (AKLLKQIGLK…VARIAAKIMV (192 aa)). Residues arginine 702, lysine 741, leucine 743, glutamate 748, glycine 773, valine 774, histidine 775, serine 776, glutamine 816, and glutamate 828 each contribute to the ATP site. Mg(2+) is bound by residues glutamine 816, glutamate 828, and asparagine 830. Residues glutamine 816, glutamate 828, and asparagine 830 each contribute to the Mn(2+) site. The MGS-like domain maps to 945 to 1099 (NPLPTTGAIL…VRRLTDTWKM (155 aa)). An allosteric domain region spans residues 945–1099 (NPLPTTGAIL…VRRLTDTWKM (155 aa)).

This sequence belongs to the CarB family. In terms of assembly, composed of two chains; the small (or glutamine) chain promotes the hydrolysis of glutamine to ammonia, which is used by the large (or ammonia) chain to synthesize carbamoyl phosphate. Tetramer of heterodimers (alpha,beta)4. Requires Mg(2+) as cofactor. Mn(2+) is required as a cofactor.

The enzyme catalyses hydrogencarbonate + L-glutamine + 2 ATP + H2O = carbamoyl phosphate + L-glutamate + 2 ADP + phosphate + 2 H(+). The catalysed reaction is hydrogencarbonate + NH4(+) + 2 ATP = carbamoyl phosphate + 2 ADP + phosphate + 2 H(+). The protein operates within amino-acid biosynthesis; L-arginine biosynthesis; carbamoyl phosphate from bicarbonate: step 1/1. It participates in pyrimidine metabolism; UMP biosynthesis via de novo pathway; (S)-dihydroorotate from bicarbonate: step 1/3. In terms of biological role, large subunit of the glutamine-dependent carbamoyl phosphate synthetase (CPSase). CPSase catalyzes the formation of carbamoyl phosphate from the ammonia moiety of glutamine, carbonate, and phosphate donated by ATP, constituting the first step of 2 biosynthetic pathways, one leading to arginine and/or urea and the other to pyrimidine nucleotides. The large subunit (synthetase) binds the substrates ammonia (free or transferred from glutamine from the small subunit), hydrogencarbonate and ATP and carries out an ATP-coupled ligase reaction, activating hydrogencarbonate by forming carboxy phosphate which reacts with ammonia to form carbamoyl phosphate. This is Carbamoyl phosphate synthase large chain from Thermotoga maritima (strain ATCC 43589 / DSM 3109 / JCM 10099 / NBRC 100826 / MSB8).